The primary structure comprises 433 residues: uncharacterized protein (433 aa).

The N-terminal stretch at 1–28 is a signal peptide; the sequence is MKICGLEKFRVFLSLISMVSLLCNGVNG. Over 29–274 the chain is Extracellular; that stretch reads FTIVRSMAVN…QAELEPKKTG (246 aa). The span at 235-250 shows a compositional bias: polar residues; sequence GENANPTANSGTSARS. Residues 235 to 266 are disordered; it reads GENANPTANSGTSARSNRNEQNKMEEPARNQA. Residues 251–266 are compositionally biased toward basic and acidic residues; it reads NRNEQNKMEEPARNQA. Residues 275–295 traverse the membrane as a helical segment; the sequence is VVVAGVTVSLAAGFVLALATL. At 296-433 the chain is on the cytoplasmic side; it reads LLMKKKQTSL…HDKGTDEDKG (138 aa). Disordered regions lie at residues 320–340 and 413–433; these read EEPV…PSFD and KVIE…EDKG.

In terms of tissue distribution, component of the acid-insoluble and acid-soluble organic matrix of the aragonitic skeleton (at protein level).

The protein resides in the membrane. This is an uncharacterized protein from Acropora millepora (Staghorn coral).